Reading from the N-terminus, the 438-residue chain is UDP-glycosyltransferase 84B2 (438 aa).

UDP-alpha-D-glucose-binding positions include Ser-260, 314–316 (GQQ), 331–339 (HCGWNSTIE), and 353–356 (WIDQ).

The protein belongs to the UDP-glycosyltransferase family.

This Arabidopsis thaliana (Mouse-ear cress) protein is UDP-glycosyltransferase 84B2 (UGT84B2).